The following is a 437-amino-acid chain: Glutamyl-tRNA reductase (437 aa).

Residues 49–52 (TCNR), serine 109, 114–116 (EGQ), and glutamine 120 contribute to the substrate site. Residue cysteine 50 is the Nucleophile of the active site. 198 to 203 (GAGRMS) provides a ligand contact to NADP(+).

It belongs to the glutamyl-tRNA reductase family. In terms of assembly, homodimer.

It carries out the reaction (S)-4-amino-5-oxopentanoate + tRNA(Glu) + NADP(+) = L-glutamyl-tRNA(Glu) + NADPH + H(+). It functions in the pathway porphyrin-containing compound metabolism; protoporphyrin-IX biosynthesis; 5-aminolevulinate from L-glutamyl-tRNA(Glu): step 1/2. Its pathway is porphyrin-containing compound metabolism; chlorophyll biosynthesis. Functionally, catalyzes the NADPH-dependent reduction of glutamyl-tRNA(Glu) to glutamate 1-semialdehyde (GSA). This Synechococcus sp. (strain CC9311) protein is Glutamyl-tRNA reductase.